A 344-amino-acid chain; its full sequence is GTP 3',8-cyclase (344 aa).

The Radical SAM core domain occupies 19-245 (PFGRAVTYLR…DIPYRTGGPA (227 aa)). Residue R28 participates in GTP binding. [4Fe-4S] cluster is bound by residues C35 and C39. An S-adenosyl-L-methionine-binding site is contributed by Y41. Position 42 (C42) interacts with [4Fe-4S] cluster. R77 contacts GTP. G81 lines the S-adenosyl-L-methionine pocket. A GTP-binding site is contributed by T111. S135 contributes to the S-adenosyl-L-methionine binding site. Position 171 (K171) interacts with GTP. M205 is a binding site for S-adenosyl-L-methionine. 2 residues coordinate [4Fe-4S] cluster: C268 and C271. A GTP-binding site is contributed by 273-275 (RVR). A [4Fe-4S] cluster-binding site is contributed by C285.

The protein belongs to the radical SAM superfamily. MoaA family. In terms of assembly, monomer and homodimer. [4Fe-4S] cluster serves as cofactor.

It catalyses the reaction GTP + AH2 + S-adenosyl-L-methionine = (8S)-3',8-cyclo-7,8-dihydroguanosine 5'-triphosphate + 5'-deoxyadenosine + L-methionine + A + H(+). Its pathway is cofactor biosynthesis; molybdopterin biosynthesis. In terms of biological role, catalyzes the cyclization of GTP to (8S)-3',8-cyclo-7,8-dihydroguanosine 5'-triphosphate. The chain is GTP 3',8-cyclase from Brucella abortus (strain S19).